The sequence spans 335 residues: Holliday junction branch migration complex subunit RuvB (335 aa).

Residues 4 to 184 (ADRLIDATEK…FGIVQRLEFY (181 aa)) are large ATPase domain (RuvB-L). ATP-binding positions include isoleucine 23, arginine 24, glycine 65, lysine 68, threonine 69, threonine 70, 131–133 (EDY), arginine 174, tyrosine 184, and arginine 221. Residue threonine 69 participates in Mg(2+) binding. The segment at 185 to 255 (SVEDLSYIVG…VAELALNMID (71 aa)) is small ATPAse domain (RuvB-S). A head domain (RuvB-H) region spans residues 258 to 335 (KSGFDYMDRK…HHFGLLPKQD (78 aa)). DNA contacts are provided by arginine 313 and arginine 318.

The protein belongs to the RuvB family. In terms of assembly, homohexamer. Forms an RuvA(8)-RuvB(12)-Holliday junction (HJ) complex. HJ DNA is sandwiched between 2 RuvA tetramers; dsDNA enters through RuvA and exits via RuvB. An RuvB hexamer assembles on each DNA strand where it exits the tetramer. Each RuvB hexamer is contacted by two RuvA subunits (via domain III) on 2 adjacent RuvB subunits; this complex drives branch migration. In the full resolvosome a probable DNA-RuvA(4)-RuvB(12)-RuvC(2) complex forms which resolves the HJ.

The protein resides in the cytoplasm. The enzyme catalyses ATP + H2O = ADP + phosphate + H(+). The RuvA-RuvB-RuvC complex processes Holliday junction (HJ) DNA during genetic recombination and DNA repair, while the RuvA-RuvB complex plays an important role in the rescue of blocked DNA replication forks via replication fork reversal (RFR). RuvA specifically binds to HJ cruciform DNA, conferring on it an open structure. The RuvB hexamer acts as an ATP-dependent pump, pulling dsDNA into and through the RuvAB complex. RuvB forms 2 homohexamers on either side of HJ DNA bound by 1 or 2 RuvA tetramers; 4 subunits per hexamer contact DNA at a time. Coordinated motions by a converter formed by DNA-disengaged RuvB subunits stimulates ATP hydrolysis and nucleotide exchange. Immobilization of the converter enables RuvB to convert the ATP-contained energy into a lever motion, pulling 2 nucleotides of DNA out of the RuvA tetramer per ATP hydrolyzed, thus driving DNA branch migration. The RuvB motors rotate together with the DNA substrate, which together with the progressing nucleotide cycle form the mechanistic basis for DNA recombination by continuous HJ branch migration. Branch migration allows RuvC to scan DNA until it finds its consensus sequence, where it cleaves and resolves cruciform DNA. This Pseudoalteromonas translucida (strain TAC 125) protein is Holliday junction branch migration complex subunit RuvB.